A 380-amino-acid chain; its full sequence is Cytochrome b (380 aa).

The next 4 membrane-spanning stretches (helical) occupy residues 34–54 (FGSLLGICLATQILTGLLLAA), 78–99 (WLIRNLHANGASFFFICIYLHI), 114–134 (WNTGVILLLTLMATAFVGYVL), and 179–199 (FFTLHFLLPFMIMGLTLIHLT). 2 residues coordinate heme b: His84 and His98. 2 residues coordinate heme b: His183 and His197. His202 lines the a ubiquinone pocket. The next 4 membrane-spanning stretches (helical) occupy residues 227-247 (LKDILGFMLMLFPLMTLALFS), 289-309 (LGGVLALAASVLILFLAPLLH), 321-341 (FSQLLFWTLAANLLILTWVGS), and 348-368 (FIIIGQLASLTYFTILLILFP).

The protein belongs to the cytochrome b family. As to quaternary structure, the cytochrome bc1 complex contains 11 subunits: 3 respiratory subunits (MT-CYB, CYC1 and UQCRFS1), 2 core proteins (UQCRC1 and UQCRC2) and 6 low-molecular weight proteins (UQCRH/QCR6, UQCRB/QCR7, UQCRQ/QCR8, UQCR10/QCR9, UQCR11/QCR10 and a cleavage product of UQCRFS1). This cytochrome bc1 complex then forms a dimer. Heme b is required as a cofactor.

Its subcellular location is the mitochondrion inner membrane. Functionally, component of the ubiquinol-cytochrome c reductase complex (complex III or cytochrome b-c1 complex) that is part of the mitochondrial respiratory chain. The b-c1 complex mediates electron transfer from ubiquinol to cytochrome c. Contributes to the generation of a proton gradient across the mitochondrial membrane that is then used for ATP synthesis. In Antigone vipio (White-naped crane), this protein is Cytochrome b (MT-CYB).